We begin with the raw amino-acid sequence, 146 residues long: Hemoglobin subunit beta (146 aa).

Val-1 bears the N-acetylvaline mark. The region spanning 2–146 (HLTGEEKSAV…VANALAHKYH (145 aa)) is the Globin domain. Thr-12 is modified (phosphothreonine). Ser-44 carries the post-translational modification Phosphoserine. Position 59 is an N6-acetyllysine (Lys-59). His-63 lines the heme b pocket. At Lys-82 the chain carries N6-acetyllysine. His-92 provides a ligand contact to heme b. Cys-93 carries the post-translational modification S-nitrosocysteine. Lys-144 carries the N6-acetyllysine modification.

This sequence belongs to the globin family. As to quaternary structure, heterotetramer of two alpha chains and two beta chains. In terms of tissue distribution, red blood cells.

In terms of biological role, involved in oxygen transport from the lung to the various peripheral tissues. In Nycticebus coucang (Slow loris), this protein is Hemoglobin subunit beta (HBB).